Here is a 305-residue protein sequence, read N- to C-terminus: Heme A synthase (305 aa).

At 1-6 (MKKFLK) the chain is on the cytoplasmic side. Residues 7–27 (VWSVLTIICMTVVVFGGALVT) form a helical membrane-spanning segment. Residues 28 to 63 (KTGSADGCGNSWPLCNGQLVRLTDVTPEKLIEFMHR) lie on the Extracellular side of the membrane. A disulfide bridge connects residues C35 and C42. E59 is a catalytic residue. A heme o-binding site is contributed by H62. Residues 64–84 (MTTGISSIFVIVLAICAWIYM) traverse the membrane as a helical segment. At 85-92 (KNRRETKP) the chain is on the cytoplasmic side. A helical membrane pass occupies residues 93 to 113 (LAIIAVLFLIIQALMGMAAVV). Topologically, residues 114–122 (WGQNPYIMA) are extracellular. A helical membrane pass occupies residues 123–143 (LHFGISIICYASIVLLALMIF). Heme o is bound at residue H124. Topologically, residues 144 to 160 (EVDRKFDARNLVMGTKL) are cytoplasmic. Residues 161-181 (RINIYALTIYTYLAVYTGALV) traverse the membrane as a helical segment. Residues 182–212 (RHEKASMAVPVWPFENGHFIMPTSVQDYVQY) lie on the Extracellular side of the membrane. The chain crosses the membrane as a helical span at residues 213–233 (FHRLAAFILIVWLLYVTWLVF). H214 is a binding site for heme b. At 234–240 (RDYRRYR) the chain is on the cytoplasmic side. A helical transmembrane segment spans residues 241–261 (VLTFSMVLSLVFIALQAVTGA). Topologically, residues 262-271 (LSVYTGVNLY) are extracellular. Residues 272 to 292 (IALAHSLIITMLFALLCYLCL) form a helical membrane-spanning segment. H276 lines the heme b pocket. At 293–305 (LASRSKSNRLRIK) the chain is on the cytoplasmic side.

It belongs to the COX15/CtaA family. Type 1 subfamily. In terms of assembly, interacts with CtaB. Heme b is required as a cofactor.

It is found in the cell membrane. The enzyme catalyses Fe(II)-heme o + 2 A + H2O = Fe(II)-heme a + 2 AH2. The protein operates within porphyrin-containing compound metabolism; heme A biosynthesis; heme A from heme O: step 1/1. Catalyzes the conversion of heme O to heme A by two successive hydroxylations of the methyl group at C8. The first hydroxylation forms heme I, the second hydroxylation results in an unstable dihydroxymethyl group, which spontaneously dehydrates, resulting in the formyl group of heme A. This chain is Heme A synthase, found in Listeria monocytogenes serotype 4b (strain F2365).